The primary structure comprises 670 residues: Thrombospondin-type laminin G domain and EAR repeat-containing protein (670 aa).

An N-terminal signal peptide occupies residues 1 to 20; it reads MSALLMLCAVLLLLGTPSRG. A Laminin G-like domain is found at 59–278; that stretch reads GLQFSATEPR…KVTLGSRPPC (220 aa). 7 EAR repeats span residues 314–359, 361–409, 413–461, 465–513, 515–571, 575–623, and 626–669; these read DYVE…KWTD, KFVS…KWSP, KFTL…RWNP, LFEA…IWLV, AFQL…ELNI, TFVK…RWQG, and GFVA…KLRT. N-linked (GlcNAc...) asparagine glycosylation is present at asparagine 498.

In terms of tissue distribution, in the organ of Corti, expression at postnatal day 1 (P1) is restricted to the basal region of the stereocilia of inner and outer hair cells (at protein level). Expressed in the organ of Corti at P1 and P7, in cochlear ganglion, stria vascularis and vestibular ends at P7, and in inferior colliculus, remaining brainstem, cerebellum, brain hemispheres and retina at P1, P7 and in the adult. Also detected in adult liver, lung, kidney, intestine and testis but not in heart or skeletal muscle.

Its subcellular location is the secreted. The protein localises to the cell surface. It is found in the cell projection. The protein resides in the stereocilium. Functionally, plays a critical role in tooth and hair follicle morphogenesis through regulation of the Notch signaling pathway. May play a role in development or function of the auditory system. The sequence is that of Thrombospondin-type laminin G domain and EAR repeat-containing protein from Mus musculus (Mouse).